The following is a 40-amino-acid chain: Photosystem II reaction center protein J (40 aa).

The helical transmembrane segment at 8-28 (IPLWLIGTVAGILIIGLLGVF) threads the bilayer.

It belongs to the PsbJ family. In terms of assembly, PSII is composed of 1 copy each of membrane proteins PsbA, PsbB, PsbC, PsbD, PsbE, PsbF, PsbH, PsbI, PsbJ, PsbK, PsbL, PsbM, PsbT, PsbX, PsbY, PsbZ, Psb30/Ycf12, at least 3 peripheral proteins of the oxygen-evolving complex and a large number of cofactors. It forms dimeric complexes.

It is found in the plastid. Its subcellular location is the chloroplast thylakoid membrane. In terms of biological role, one of the components of the core complex of photosystem II (PSII). PSII is a light-driven water:plastoquinone oxidoreductase that uses light energy to abstract electrons from H(2)O, generating O(2) and a proton gradient subsequently used for ATP formation. It consists of a core antenna complex that captures photons, and an electron transfer chain that converts photonic excitation into a charge separation. This is Photosystem II reaction center protein J from Nandina domestica (Heavenly bamboo).